We begin with the raw amino-acid sequence, 1262 residues long: Histone-lysine N-methyltransferase eggless (1262 aa).

Positions 1–194 (MSGQPTAVDC…MEVDQDVEES (194 aa)) are disordered. 3 stretches are compositionally biased toward basic and acidic residues: residues 26 to 41 (ASRE…KGEN), 50 to 61 (AAKDVEIEELTH), and 81 to 99 (APDE…KGEN). The segment covering 157–166 (SSISSPTSES) has biased composition (low complexity). Basic and acidic residues predominate over residues 167–179 (FPEKDEKTNKENE). Serine 215 carries the post-translational modification Phosphoserine. Threonine 217 bears the Phosphothreonine mark. Residues 353-420 (EKSDFSKNKL…LEKVQTTADK (68 aa)) are a coiled coil. Tudor domains are found at residues 529–602 (RLTI…SEKV) and 629–686 (QCTR…RETQ). The tract at residues 743–764 (SSAATPAGGRTNAGGVSTSNSA) is disordered. The MBD domain occupies 818–884 (LDSYSPLAKP…DNFDFTPDLK (67 aa)). Positions 946-1018 (LCCDCEDDCS…NCLNRVVQFS (73 aa)) constitute a Pre-SET domain. Positions 948, 950, 954, 960, 962, 1000, 1004, 1006, and 1010 each coordinate Zn(2+). The region spanning 1021–1237 (MKLQVFKTSN…SGTELTWNYN (217 aa)) is the SET domain. S-adenosyl-L-methionine contacts are provided by residues 1031-1033 (RGW), aspartate 1069, and tyrosine 1071. A compositionally biased stretch (basic and acidic residues) spans 1086-1097 (EGYESEVDHSDP). Positions 1086–1148 (EGYESEVDHS…QSSELDSQER (63 aa)) are disordered. A compositionally biased stretch (acidic residues) spans 1098–1113 (DAEEDNGGPDAEDDDD). Residues 1129 to 1141 (RSGSTQNSSTQSS) show a composition bias toward low complexity. S-adenosyl-L-methionine contacts are provided by residues arginine 1191 and 1194–1195 (NH). 4 residues coordinate Zn(2+): cysteine 1197, cysteine 1250, cysteine 1252, and cysteine 1257. The Post-SET domain maps to 1246–1262 (KVLYCQCGAPNCRLRLL).

It belongs to the class V-like SAM-binding methyltransferase superfamily. Histone-lysine methyltransferase family. Suvar3-9 subfamily. As to expression, expressed in ovary (at protein level).

It is found in the nucleus. The protein localises to the chromosome. The catalysed reaction is L-lysyl(9)-[histone H3] + 3 S-adenosyl-L-methionine = N(6),N(6),N(6)-trimethyl-L-lysyl(9)-[histone H3] + 3 S-adenosyl-L-homocysteine + 3 H(+). Functionally, histone methyltransferase that specifically trimethylates 'Lys-10' of histone H3 (H3K9me3) in ovary. H3K9me3 represents a specific tag for epigenetic transcriptional repression by recruiting Su(var)205/HP1 to methylated histones. Plays a central role during oogenesis. The polypeptide is Histone-lysine N-methyltransferase eggless (egg) (Drosophila melanogaster (Fruit fly)).